An 822-amino-acid chain; its full sequence is Sodium/hydrogen exchanger 1 (822 aa).

The Extracellular segment spans residues 1–102; sequence MMLRWSGIWG…FPVLDIDYLH (102 aa). Positions 41–73 are disordered; that stretch reads SPTANTIRGAEPPRERSIGDVTTAPSEPVHHPD. The chain crosses the membrane as a helical span at residues 103 to 125; it reads VRTPFEISLWILLACLMKIGFHV. Residues 126 to 134 lie on the Cytoplasmic side of the membrane; sequence IPTISSIVP. The chain crosses the membrane as a helical span at residues 135 to 152; it reads ESCLLIVVGLLVGGLIKG. The Extracellular segment spans residues 153–162; sequence VGETPPFLQS. Residues 163–180 form a helical membrane-spanning segment; it reads DVFFLFLLPPIILDAGYF. At 181–190 the chain is on the cytoplasmic side; that stretch reads LPLRQFTENL. The helical transmembrane segment at 191-219 threads the bilayer; that stretch reads GTILIFAVVGTLWNAFFLGGLLYAVCLVG. The Extracellular portion of the chain corresponds to 220–226; that stretch reads GEQINNI. A helical membrane pass occupies residues 227 to 253; the sequence is GLLDTLLFGSIISAVDPVAVVAVFEEI. At 254 to 256 the chain is on the cytoplasmic side; that stretch reads HIN. Residues 257-287 form a helical membrane-spanning segment; that stretch reads ELLHILVFGESLLNDAVTVVLYHLFEEFANY. Residues 288–291 are Extracellular-facing; that stretch reads DSIG. A helical transmembrane segment spans residues 292–326; that stretch reads ISDIFLGFLSFFVVALGGVFVGVVYGVIAAFTSRF. At 327–332 the chain is on the cytoplasmic side; it reads TSHIRV. A helical transmembrane segment spans residues 333–345; that stretch reads IEPLFVFLYSYMA. The Extracellular segment spans residues 346–354; the sequence is YLSAELFHL. A helical transmembrane segment spans residues 355-375; that stretch reads SGIMALIASGVVMRPYVEANI. Over 376–377 the chain is Cytoplasmic; the sequence is SH. Residues 378–408 traverse the membrane as a helical segment; the sequence is KSHTTIKYFLKMWSSVSETLIFIFLGVSTVA. Topologically, residues 409-414 are extracellular; sequence GSHQWN. The helical transmembrane segment at 415–442 threads the bilayer; that stretch reads WTFVISTLLFCLIARVLGVLVLTWFINK. Over 443–448 the chain is Cytoplasmic; it reads FRIVKL. A helical transmembrane segment spans residues 449–473; sequence TPKDQFIIAYGGLRGAIAFSLGYLM. At 474 to 479 the chain is on the extracellular side; it reads DKKHFP. The chain crosses the membrane as a helical span at residues 480–509; sequence MCDLFLTAIITVIFFTVFVQGMTIRPLVDL. The interaction with TESC stretch occupies residues 507-549; sequence VDLLAVKKKQETKRSINEEIHTQFLDHLLTGIEDICGHYGHHH. Residues 510 to 822 lie on the Cytoplasmic side of the membrane; sequence LAVKKKQETK…EGEPFIPKGE (313 aa). Residues 513–520 are PI(4,5)P2-binding region; that stretch reads KKKQETKR. The interval 519–549 is interaction with CHP2; it reads KRSINEEIHTQFLDHLLTGIEDICGHYGHHH. The tract at residues 544–549 is confers pH-dependent PI(4,5)P2 binding; the sequence is HYGHHH. Residues 556-564 form a PI(4,5)P2-binding region region; it reads RFNKKYVKK. Phosphoserine occurs at positions 603 and 606. T607 is subject to Phosphothreonine. 2 positions are modified to phosphoserine: S609 and S652. An interaction with TESC region spans residues 637 to 822; the sequence is KILRSNLQKT…EGEPFIPKGE (186 aa). The interval 637–822 is interaction with CALM1; sequence KILRSNLQKT…EGEPFIPKGE (186 aa). The interval 688–691 is interaction with PPP3CA; that stretch reads LTVP. A phosphoserine mark is found at S697, S701, and S707. The interaction with PPP3CA stretch occupies residues 719–724; that stretch reads PVITID. 3 positions are modified to phosphoserine: S727, S730, and S733. Residues 752 to 822 form a disordered region; it reads PTRLTRGEED…EGEPFIPKGE (71 aa). Position 756 is a phosphothreonine (T756). Over residues 759–768 the composition is skewed to acidic residues; it reads EEDEDEDEDG. T786 carries the phosphothreonine modification. S792, S794, and S803 each carry phosphoserine.

This sequence belongs to the monovalent cation:proton antiporter 1 (CPA1) transporter (TC 2.A.36) family. In terms of assembly, homodimer; dimerization is crucial for its function. Oligomer. Interacts with CALM in a calcium-dependent manner. Interacts with TESC. Interacts (via the juxtamembrane region of the cytoplasmic C-terminal domain) with CHP1; the interaction occurs at the plasma membrane in a calcium-dependent manner. Interacts with CHP2; the interaction occurs in a calcium-dependent manner. Interacts with EZR; regulates the cytoskeletal interactions of SLC9A1 and promotes stress fiber formation. Ubiquitinated, leading to its degradation by the proteasome. Ubiquitination is reduced by CHP1. In terms of processing, O-glycosylated. Post-translationally, palmitoylated; may play a major role in SLC9A1 regulation. Phosphorylation at Thr-786 increases SLC9A1 activity. Specifically dephosphorylated at Thr-786 by PPP3CA that negatively regulates SLC9A1 activity. Phosphorylation at Ser-652 by AKT1 reduces SLC9A1 binding to CALM1.

Its subcellular location is the cell membrane. It localises to the basolateral cell membrane. The catalysed reaction is Na(+)(in) + H(+)(out) = Na(+)(out) + H(+)(in). It catalyses the reaction Li(+)(out) + H(+)(in) = Li(+)(in) + H(+)(out). The enzyme catalyses Li(+)(in) + Na(+)(out) = Li(+)(out) + Na(+)(in). Its activity is regulated as follows. Activated at acidic pHs. Inhibited by amiloride and 5-amino-substituted derivatives. Inhibited by cariporide and eniporide. Phosphatidylinositol 4,5-bisphosphate (PI(4,5)P2) and phosphatidylinositol 3,4,5-trisphosphate (PI(3,4,5)P3) bind and differentially regulate SLC9A1 activity. In terms of biological role, electroneutral Na(+) /H(+) antiporter that extrudes Na(+) in exchange for external protons driven by the inward sodium ion chemical gradient, protecting cells from acidification that occurs from metabolism. Exchanges intracellular H(+) ions for extracellular Na(+) in 1:1 stoichiometry. Plays a key role in maintening intracellular pH neutral and cell volume, and thus is important for cell growth, proliferation, migration and survival. In addition, can transport lithium Li(+) and also functions as a Na(+)/Li(+) antiporter. SLC9A1 also functions in membrane anchoring and organization of scaffolding complexes that coordinate signaling inputs. This chain is Sodium/hydrogen exchanger 1 (SLC9A1), found in Cricetulus griseus (Chinese hamster).